The primary structure comprises 275 residues: Diaminopimelate epimerase (275 aa).

Substrate contacts are provided by Asn12, Gln45, and Asn65. Cys74 serves as the catalytic Proton donor. Residues 75–76, Asn158, Asn191, and 209–210 contribute to the substrate site; these read GN and ER. Catalysis depends on Cys218, which acts as the Proton acceptor. 219–220 provides a ligand contact to substrate; the sequence is GT.

This sequence belongs to the diaminopimelate epimerase family. In terms of assembly, homodimer.

The protein localises to the cytoplasm. It carries out the reaction (2S,6S)-2,6-diaminopimelate = meso-2,6-diaminopimelate. Its pathway is amino-acid biosynthesis; L-lysine biosynthesis via DAP pathway; DL-2,6-diaminopimelate from LL-2,6-diaminopimelate: step 1/1. Catalyzes the stereoinversion of LL-2,6-diaminopimelate (L,L-DAP) to meso-diaminopimelate (meso-DAP), a precursor of L-lysine and an essential component of the bacterial peptidoglycan. The protein is Diaminopimelate epimerase of Shewanella denitrificans (strain OS217 / ATCC BAA-1090 / DSM 15013).